The sequence spans 73 residues: Large ribosomal subunit protein bL31 (73 aa).

Belongs to the bacterial ribosomal protein bL31 family. Type A subfamily. In terms of assembly, part of the 50S ribosomal subunit.

In terms of biological role, binds the 23S rRNA. The chain is Large ribosomal subunit protein bL31 from Brucella abortus (strain 2308).